We begin with the raw amino-acid sequence, 485 residues long: Adenosylhomocysteinase (485 aa).

Substrate-binding residues include Thr64, Asp139, and Glu205. Position 206–208 (206–208 (TTT)) interacts with NAD(+). Positions 235 and 239 each coordinate substrate. NAD(+)-binding positions include Asn240, 269-274 (GYGDVG), Glu292, Asn327, 348-350 (IGH), and Asn397.

It belongs to the adenosylhomocysteinase family. NAD(+) serves as cofactor.

It carries out the reaction S-adenosyl-L-homocysteine + H2O = L-homocysteine + adenosine. Its pathway is amino-acid biosynthesis; L-homocysteine biosynthesis; L-homocysteine from S-adenosyl-L-homocysteine: step 1/1. In terms of biological role, adenosylhomocysteine is a competitive inhibitor of S-adenosyl-L-methionine-dependent methyl transferase reactions; therefore adenosylhomocysteinase may play a key role in the control of methylations via regulation of the intracellular concentration of adenosylhomocysteine. This is Adenosylhomocysteinase (SAHH) from Solanum lycopersicum (Tomato).